A 93-amino-acid chain; its full sequence is MLCAVYKSRKKAETYLFVERREDFSRVPEVLMSAFGRPELVLMTKLDPAKPLGIASTSRVMEALQSQGFYLQVPPPPENLLEQHKAQLKAERE.

The YcgL domain maps to 1 to 85 (MLCAVYKSRK…PPENLLEQHK (85 aa)).

This Aeromonas hydrophila subsp. hydrophila (strain ATCC 7966 / DSM 30187 / BCRC 13018 / CCUG 14551 / JCM 1027 / KCTC 2358 / NCIMB 9240 / NCTC 8049) protein is YcgL domain-containing protein AHA_2135.